Here is a 179-residue protein sequence, read N- to C-terminus: Ribosome-recycling factor (179 aa).

It belongs to the RRF family.

It is found in the cytoplasm. In terms of biological role, responsible for the release of ribosomes from messenger RNA at the termination of protein biosynthesis. May increase the efficiency of translation by recycling ribosomes from one round of translation to another. The protein is Ribosome-recycling factor of Chlamydia trachomatis serovar A (strain ATCC VR-571B / DSM 19440 / HAR-13).